A 299-amino-acid polypeptide reads, in one-letter code: Ribosomal RNA small subunit methyltransferase H (299 aa).

S-adenosyl-L-methionine contacts are provided by residues 45-47 (GGH), aspartate 64, phenylalanine 92, aspartate 108, and glutamine 115. The disordered stretch occupies residues 275–299 (PQSDEQAKNPRSRSAKLRLAQRKEQ). A compositionally biased stretch (basic residues) spans 284 to 299 (PRSRSAKLRLAQRKEQ).

The protein belongs to the methyltransferase superfamily. RsmH family.

Its subcellular location is the cytoplasm. It carries out the reaction cytidine(1402) in 16S rRNA + S-adenosyl-L-methionine = N(4)-methylcytidine(1402) in 16S rRNA + S-adenosyl-L-homocysteine + H(+). Functionally, specifically methylates the N4 position of cytidine in position 1402 (C1402) of 16S rRNA. In Gloeothece citriformis (strain PCC 7424) (Cyanothece sp. (strain PCC 7424)), this protein is Ribosomal RNA small subunit methyltransferase H.